A 393-amino-acid chain; its full sequence is Protein FAM47E (393 aa).

The stretch at 326–354 (VSHKAQEENFKKELQEQEELLADLHGTVA) forms a coiled coil.

The protein belongs to the FAM47 family. In terms of assembly, interacts with PRMT5; the interaction is direct. Interacts with WDR77.

It localises to the nucleus. It is found in the chromosome. Its subcellular location is the cytoplasm. Functionally, promotes histone methylation by localizing the arginine methyltransferase PRMT5 to chromatin. The protein is Protein FAM47E (FAM47E) of Homo sapiens (Human).